A 707-amino-acid chain; its full sequence is Potassium-transporting ATPase ATP-binding subunit (707 aa).

Residues 1–11 show a composition bias toward basic and acidic residues; sequence MNTDTQKHEDA. The segment at 1–37 is disordered; the sequence is MNTDTQKHEDAMSTTTPARAPHDDAPSGQQPGQGRVG. The next 4 membrane-spanning stretches (helical) occupy residues 61 to 81, 89 to 109, 238 to 258, and 271 to 291; these read VMAK…TTAF, WFGW…NLAE, IALN…CATL, and MIVL…ALLS. The active-site 4-aspartylphosphate intermediate is the Asp326. ATP is bound by residues Asp363, Glu367, 397-404, and Lys415; that span reads FTAQTRMS. The Mg(2+) site is built by Asp542 and Asp546. Transmembrane regions (helical) follow at residues 612-632, 640-660, and 683-703; these read FAII…LNIM, AILS…PLAL, and LGGL…VSLI.

The protein belongs to the cation transport ATPase (P-type) (TC 3.A.3) family. Type IA subfamily. In terms of assembly, the system is composed of three essential subunits: KdpA, KdpB and KdpC.

The protein localises to the cell membrane. The enzyme catalyses K(+)(out) + ATP + H2O = K(+)(in) + ADP + phosphate + H(+). In terms of biological role, part of the high-affinity ATP-driven potassium transport (or Kdp) system, which catalyzes the hydrolysis of ATP coupled with the electrogenic transport of potassium into the cytoplasm. This subunit is responsible for energy coupling to the transport system and for the release of the potassium ions to the cytoplasm. The polypeptide is Potassium-transporting ATPase ATP-binding subunit (Streptomyces coelicolor (strain ATCC BAA-471 / A3(2) / M145)).